A 342-amino-acid polypeptide reads, in one-letter code: Probable allantoicase (342 aa).

It belongs to the allantoicase family.

It carries out the reaction allantoate + H2O = (S)-ureidoglycolate + urea. It functions in the pathway nitrogen metabolism; (S)-allantoin degradation; (S)-ureidoglycolate from allantoate (aminidohydrolase route): step 1/1. Utilization of purines as secondary nitrogen sources, when primary sources are limiting. This Schizosaccharomyces pombe (strain 972 / ATCC 24843) (Fission yeast) protein is Probable allantoicase.